Here is a 419-residue protein sequence, read N- to C-terminus: UDP-N-acetylglucosamine 1-carboxyvinyltransferase 2 (419 aa).

A phosphoenolpyruvate-binding site is contributed by 22-23; the sequence is KN. UDP-N-acetyl-alpha-D-glucosamine is bound at residue Arg-92. Cys-116 serves as the catalytic Proton donor. Cys-116 carries the post-translational modification 2-(S-cysteinyl)pyruvic acid O-phosphothioketal. Residues 121-125, Asp-306, and Ile-328 each bind UDP-N-acetyl-alpha-D-glucosamine; that span reads RPIDL.

It belongs to the EPSP synthase family. MurA subfamily.

Its subcellular location is the cytoplasm. It carries out the reaction phosphoenolpyruvate + UDP-N-acetyl-alpha-D-glucosamine = UDP-N-acetyl-3-O-(1-carboxyvinyl)-alpha-D-glucosamine + phosphate. It functions in the pathway cell wall biogenesis; peptidoglycan biosynthesis. In terms of biological role, cell wall formation. Adds enolpyruvyl to UDP-N-acetylglucosamine. The sequence is that of UDP-N-acetylglucosamine 1-carboxyvinyltransferase 2 from Streptococcus pyogenes serotype M18 (strain MGAS8232).